A 244-amino-acid polypeptide reads, in one-letter code: MDHFPLKRPHFFFTTAPLPCPYVSGRLERKIVTELNGTDADSLHEALSRAGFRRSHSIAYTPACPGCSACIPVRIVADDFVPDRTMRRIWRANGGLTASKVPARASADQFRLFARYQESRHSGGDMALMGFYDYRSMVEDSPIDTFIVEFRDGDGNLAAACLADRMNDGLSAVYSFFDPDLASRSLGTFMVLWLVEEAKRMALPFVYLGYWIGESRKMSYKTRYQPLEAFGPDGWKRFAPGDGA.

This sequence belongs to the R-transferase family. Bpt subfamily.

Its subcellular location is the cytoplasm. The enzyme catalyses N-terminal L-glutamyl-[protein] + L-leucyl-tRNA(Leu) = N-terminal L-leucyl-L-glutamyl-[protein] + tRNA(Leu) + H(+). It catalyses the reaction N-terminal L-aspartyl-[protein] + L-leucyl-tRNA(Leu) = N-terminal L-leucyl-L-aspartyl-[protein] + tRNA(Leu) + H(+). Functions in the N-end rule pathway of protein degradation where it conjugates Leu from its aminoacyl-tRNA to the N-termini of proteins containing an N-terminal aspartate or glutamate. This is Aspartate/glutamate leucyltransferase from Paramagnetospirillum magneticum (strain ATCC 700264 / AMB-1) (Magnetospirillum magneticum).